A 120-amino-acid polypeptide reads, in one-letter code: Reprimo-like protein (120 aa).

The chain crosses the membrane as a helical span at residues 67–87; that stretch reads VAQIAVLCVLSLTVVFGVFFL. Ser-109 is subject to Phosphoserine.

This sequence belongs to the reprimo family.

It localises to the membrane. The chain is Reprimo-like protein (RPRML) from Homo sapiens (Human).